The chain runs to 911 residues: Brevican core protein (911 aa).

An N-terminal signal peptide occupies residues 1-22 (MAQLFLPLLAALVLAQAPAALA). In terms of domain architecture, Ig-like V-type spans 36–155 (RVRIAGDAPL…SSDAVEVKVK (120 aa)). Cystine bridges form between cysteine 57/cysteine 137, cysteine 179/cysteine 250, cysteine 203/cysteine 224, cysteine 277/cysteine 352, and cysteine 301/cysteine 322. An N-linked (GlcNAc...) asparagine glycan is attached at asparagine 130. Link domains are found at residues 157–252 (VVFL…YCYA) and 257–354 (GELF…YCFR). Asparagine 337 carries N-linked (GlcNAc...) asparagine glycosylation. The disordered stretch occupies residues 391-641 (QLPQEATESE…PTDSASRGGV (251 aa)). At serine 418 the chain carries Phosphoserine. O-linked (Xyl...) (chondroitin sulfate) serine glycosylation occurs at serine 418. Positions 454 to 478 (EEEEKYEDEEEKEEEEEEEEVEDEA) are enriched in acidic residues. 2 O-glycosylated at two sites regions span residues 520-530 (SPLPDGESEAS) and 540-545 (TETLPT). Residues 569–575 (TGGPELS) are O-glycosylated at one site. Over residues 612–627 (EDNSGRTAPAGTSVQA) the composition is skewed to polar residues. Alanine 646 carries the GPI-anchor amidated alanine lipid modification. One can recognise an EGF-like domain in the interval 646-682 (ASGDCVPSPCHNGGTCLEEEEGVRCLCLPGYGGDLCD). 8 cysteine pairs are disulfide-bonded: cysteine 650–cysteine 661, cysteine 655–cysteine 670, cysteine 672–cysteine 681, cysteine 688–cysteine 699, cysteine 716–cysteine 808, cysteine 784–cysteine 800, cysteine 815–cysteine 858, and cysteine 844–cysteine 871. Residues 695–809 (FQGACYKHFS…CNYHLSYTCK (115 aa)) enclose the C-type lectin domain. Residues 813–873 (VSCGPPPELP…WEAPQISCVP (61 aa)) form the Sushi domain. O-linked (GalNAc...) serine glycans are attached at residues serine 905 and serine 906.

This sequence belongs to the aggrecan/versican proteoglycan family. Interacts with TNR. O-glycosylated; contains chondroitin sulfate. O-glycosylated with a core 1 or possibly core 8 glycan. As to expression, expressed in the retina, specifically in the inner nuclear layer, inner plexiform layer and ganglion cell layer (at protein level). Detected in cerebrospinal fluid (at protein level). Detected in urine (at protein level).

It localises to the secreted. It is found in the extracellular space. Its subcellular location is the extracellular matrix. The protein resides in the membrane. In terms of biological role, may play a role in the terminally differentiating and the adult nervous system during postnatal development. Could stabilize interactions between hyaluronan (HA) and brain proteoglycans. This Homo sapiens (Human) protein is Brevican core protein (BCAN).